Reading from the N-terminus, the 86-residue chain is Latartoxin-1b (86 aa).

A signal peptide spans 1 to 19; the sequence is MKILVLAVVCTVLLQVALS. A propeptide spans 20 to 26 (removed in mature form); that stretch reads ADSEEVR. Positions 23–26 match the Processing quadruplet motif motif; it reads EEVR. 4 disulfide bridges follow: C28-C43, C35-C48, C42-C65, and C50-C63.

It belongs to the neurotoxin 19 (CSTX) family. In terms of processing, contains 4 disulfide bonds. Cleavage of the propeptide depends on the processing quadruplet motif (XXXR, with at least one of X being E). In terms of tissue distribution, expressed by the venom gland.

Its subcellular location is the secreted. Insect toxin. This Lachesana tarabaevi (Spider) protein is Latartoxin-1b.